A 170-amino-acid polypeptide reads, in one-letter code: 4-hydroxyphenylacetate 3-monooxygenase reductase component (170 aa).

The protein belongs to the non-flavoprotein flavin reductase family. HpaC subfamily. Monomer. HPA 3-hydroxylase consists of a reductase component HpaC and an oxygenase component HpaB. Some form of interactions between the reductase and the oxygenase facilitate the transfer of FADH(-) to the oxygenase in P.aeruginosa, although interactions are not required in other species.

It carries out the reaction FADH2 + NAD(+) = FAD + NADH + 2 H(+). It functions in the pathway aromatic compound metabolism; 4-hydroxyphenylacetate degradation; pyruvate and succinate semialdehyde from 4-hydroxyphenylacetate: step 1/7. Its activity is regulated as follows. The rate of FAD reduction is independent of the presence of HPA, demonstrating that, in contrast to HPAH from A.baumannii, the activity of the HPAH reductase is not allosterically regulated by the substrate. In terms of biological role, reductase component of the 4-hydroxyphenylacetate (HPA) 3-hydroxylase. Catalyzes the reduction of FAD by NADH. The reduced flavin is then transferred to the oxygenase component HpaB. Is also able to reduce FMN and riboflavin, but preferentially binds FAD. Has no activity with NADPH as the reductant. This is 4-hydroxyphenylacetate 3-monooxygenase reductase component from Pseudomonas aeruginosa (strain ATCC 15692 / DSM 22644 / CIP 104116 / JCM 14847 / LMG 12228 / 1C / PRS 101 / PAO1).